The following is a 342-amino-acid chain: MKKRIAIVLFNLGGPKNLKSVKPFLFNLFYDKAIINLPNPLRYIIAKIISITREKKSQKIYSLIGGKSSLLQETEEQKLALTEKLKQLIKEDFAIFINMRYSAPFAKEVIGQIKKYNPSEIILLPLYSQFSSTTTGSSVKNFLQNLDIDIPIKTICCYPLEKDFIKAHVSLIKEKLYDKNFRILFSAHGLPEKIIKAGDPYSFQIKETVQAIVKELNIKDLDYKITYQSRVGPIEWLKPNTEDEIELAGKLKKDIIIVPISFVSEHVETLVELDIEYKLIADKYEIQYIRIPTLGTNKIFINSLTNILLRFINKVDTNLVMSSSSTRICPNEFTKCLCKLTS.

Positions 188 and 268 each coordinate Fe cation.

Belongs to the ferrochelatase family.

Its subcellular location is the cytoplasm. It catalyses the reaction heme b + 2 H(+) = protoporphyrin IX + Fe(2+). It participates in porphyrin-containing compound metabolism; protoheme biosynthesis; protoheme from protoporphyrin-IX: step 1/1. Its function is as follows. Catalyzes the ferrous insertion into protoporphyrin IX. The sequence is that of Ferrochelatase from Rickettsia conorii (strain ATCC VR-613 / Malish 7).